A 198-amino-acid polypeptide reads, in one-letter code: Nucleoside triphosphate pyrophosphatase (198 aa).

Catalysis depends on aspartate 70, which acts as the Proton acceptor.

It belongs to the Maf family. A divalent metal cation is required as a cofactor.

It is found in the cytoplasm. The catalysed reaction is a ribonucleoside 5'-triphosphate + H2O = a ribonucleoside 5'-phosphate + diphosphate + H(+). The enzyme catalyses a 2'-deoxyribonucleoside 5'-triphosphate + H2O = a 2'-deoxyribonucleoside 5'-phosphate + diphosphate + H(+). In terms of biological role, nucleoside triphosphate pyrophosphatase. May have a dual role in cell division arrest and in preventing the incorporation of modified nucleotides into cellular nucleic acids. This chain is Nucleoside triphosphate pyrophosphatase, found in Thermosynechococcus vestitus (strain NIES-2133 / IAM M-273 / BP-1).